A 445-amino-acid chain; its full sequence is MNRFVKGIILLSIAAFFAECLEFVVNMILARELGEHGMGLYMSILPTIFLIIVIASLELPISISKFIAESNPKLHESMLRHAFRMTAIFTAFSTAAASIALPFIPVFDTYHPFIKGIVIGLIPVVAFTSIARGYFMGVQKMGKIAIANVLKKIIQLLCLFLFFQWYSFELDMAVLISLFVLVVSDVVVLVYLYSQFIMARRALSGQQHIHLRGKDVRKRLLAVSIPTTGLRIFHAVVNAIEPFLVKGALLAAGVAGTAAIDQYGMLAGVAVTIGSFPAFIAHSLMVVMIPSISEAYALSQYDIVLKRLKQSIFITLGYGIPAVWVMFQFAGPLTHLFFHSPEAQYYLQLLWPYFLFHLFVMPLQACLIGMGFVKEAFYHNVWSHIVALSMMYVLGSMENLQMLGIILGMNTGMILLTSLHYATICKALKVSVFLTGGTRTPRIEG.

A run of 12 helical transmembrane segments spans residues 7–29 (GIIL…NMIL), 39–61 (GLYM…ELPI), 82–104 (AFRM…LPFI), 109–131 (TYHP…TSIA), 144–166 (IAIA…FQWY), 172–194 (MAVL…YLYS), 237–259 (VNAI…GTAA), 269–291 (VAVT…MIPS), 312–334 (IFIT…GPLT), 349–371 (LLWP…IGMG), 376–395 (AFYH…YVLG), and 400–422 (LQML…LHYA).

The protein localises to the forespore membrane. The chain is Sporulation protein YkvU (ykvU) from Bacillus subtilis (strain 168).